Reading from the N-terminus, the 274-residue chain is Trypsin-1 (274 aa).

Residues Met1–Cys18 form the signal peptide. Positions Ala19 to Arg47 are cleaved as a propeptide — activation peptide. The Peptidase S1 domain occupies Ile48–Gly273. Cys73 and Cys89 form a disulfide bridge. Residues His88 and Asp133 each act as charge relay system in the active site. Disulfide bonds link Cys198–Cys214 and Cys225–Cys249. Catalysis depends on Ser229, which acts as the Charge relay system.

It belongs to the peptidase S1 family. As to expression, constitutively expressed at low level in the gut of adult females. Also expressed in the gut of male and female pupae.

Its subcellular location is the secreted. It carries out the reaction Preferential cleavage: Arg-|-Xaa, Lys-|-Xaa.. In terms of biological role, major function may be to aid in digestion of the blood meal. The protein is Trypsin-1 (TRYP1) of Anopheles gambiae (African malaria mosquito).